A 163-amino-acid polypeptide reads, in one-letter code: ATP synthase subunit b, sodium ion specific (163 aa).

Residues 9 to 29 (VSIDINMFWQIINFLILMFFF) traverse the membrane as a helical segment.

Belongs to the ATPase B chain family. In terms of assembly, F-type ATPases have 2 components, F(1) - the catalytic core - and F(0) - the membrane proton channel. F(1) has five subunits: alpha(3), beta(3), gamma(1), delta(1), epsilon(1). F(0) has three main subunits: a(1), b(2) and c(10-14). The alpha and beta chains form an alternating ring which encloses part of the gamma chain. F(1) is attached to F(0) by a central stalk formed by the gamma and epsilon chains, while a peripheral stalk is formed by the delta and b chains.

Its subcellular location is the cell inner membrane. Functionally, f(1)F(0) ATP synthase produces ATP from ADP in the presence of a proton or sodium gradient. F-type ATPases consist of two structural domains, F(1) containing the extramembraneous catalytic core and F(0) containing the membrane proton channel, linked together by a central stalk and a peripheral stalk. During catalysis, ATP synthesis in the catalytic domain of F(1) is coupled via a rotary mechanism of the central stalk subunits to proton translocation. Its function is as follows. Component of the F(0) channel, it forms part of the peripheral stalk, linking F(1) to F(0). This is ATP synthase subunit b, sodium ion specific (atpF) from Ilyobacter tartaricus.